The chain runs to 395 residues: Methylthioribose-1-phosphate isomerase (395 aa).

Catalysis depends on Asp-258, which acts as the Proton donor.

This sequence belongs to the eIF-2B alpha/beta/delta subunits family. MtnA subfamily.

It is found in the cytoplasm. The protein localises to the nucleus. It carries out the reaction 5-(methylsulfanyl)-alpha-D-ribose 1-phosphate = 5-(methylsulfanyl)-D-ribulose 1-phosphate. The protein operates within amino-acid biosynthesis; L-methionine biosynthesis via salvage pathway; L-methionine from S-methyl-5-thio-alpha-D-ribose 1-phosphate: step 1/6. Functionally, catalyzes the interconversion of methylthioribose-1-phosphate (MTR-1-P) into methylthioribulose-1-phosphate (MTRu-1-P). This chain is Methylthioribose-1-phosphate isomerase, found in Podospora anserina (strain S / ATCC MYA-4624 / DSM 980 / FGSC 10383) (Pleurage anserina).